The chain runs to 282 residues: BURP domain-containing protein BNM2A (282 aa).

An N-terminal signal peptide occupies residues 1-26 (MASLRFSVTFPALLSLLLLSLWVVEA). Positions 60-282 (FFKISDLKLG…PLDNIVWVSK (223 aa)) constitute a BURP domain.

As to expression, expressed in the radicle and cotyledon of germinating seeds 2 days post-imbibition (DPI), in stems and roots of 30-DPI young plants and in floral buds, but not in fully open flowers or leaves. Expressed in the embryo and seed coat tissues of developing seeds. The protein accumulates only in seeds and only long after transcript accumulation becomes evident.

Its subcellular location is the protein storage vacuole. The chain is BURP domain-containing protein BNM2A from Brassica napus (Rape).